The chain runs to 270 residues: ATP synthase subunit a (270 aa).

5 helical membrane passes run 37-57 (NVHI…LWVF), 98-118 (IAPL…MDLV), 143-163 (DVNI…YYSI), 217-237 (VVFI…GALP), and 239-259 (AIFH…LTIV).

The protein belongs to the ATPase A chain family. As to quaternary structure, F-type ATPases have 2 components, CF(1) - the catalytic core - and CF(0) - the membrane proton channel. CF(1) has five subunits: alpha(3), beta(3), gamma(1), delta(1), epsilon(1). CF(0) has three main subunits: a(1), b(2) and c(9-12). The alpha and beta chains form an alternating ring which encloses part of the gamma chain. CF(1) is attached to CF(0) by a central stalk formed by the gamma and epsilon chains, while a peripheral stalk is formed by the delta and b chains.

Its subcellular location is the cell inner membrane. In terms of biological role, key component of the proton channel; it plays a direct role in the translocation of protons across the membrane. The chain is ATP synthase subunit a from Aliivibrio fischeri (strain ATCC 700601 / ES114) (Vibrio fischeri).